A 647-amino-acid polypeptide reads, in one-letter code: Leucine aminopeptidase 2 (647 aa).

Substrate contacts are provided by residues 169–171 and 295–300; these read QCQ and PYGGME. Position 324 (His324) interacts with Zn(2+). Glu325 serves as the catalytic Proton acceptor. The Zn(2+) site is built by His328 and Glu347. Residue Tyr418 is the Proton donor of the active site.

The protein belongs to the peptidase M1 family. It depends on Zn(2+) as a cofactor.

It localises to the cytoplasm. Its subcellular location is the nucleus. It carries out the reaction an epoxide + H2O = an ethanediol. Aminopeptidase that preferentially cleaves di- and tripeptides. Also has low epoxide hydrolase activity (in vitro). Can hydrolyze the epoxide leukotriene LTA(4) but it forms preferentially 5,6-dihydroxy-7,9,11,14-eicosatetraenoic acid rather than the cytokine leukotriene B(4) as the product compared to the homologous mammalian enzyme (in vitro). The sequence is that of Leucine aminopeptidase 2 from Yarrowia lipolytica (strain CLIB 122 / E 150) (Yeast).